The sequence spans 146 residues: Hemoglobin cathodic subunit beta (146 aa).

Residues 2–146 (QWSSSERSTI…VVSALSRQYF (145 aa)) enclose the Globin domain. His-63 and His-92 together coordinate heme b.

Belongs to the globin family. Heterotetramer of two alpha chains and two beta chains. Red blood cells.

In terms of biological role, involved in oxygen transport from the gills to the various peripheral tissues. This chain is Hemoglobin cathodic subunit beta, found in Conger conger (Conger eel).